The sequence spans 447 residues: Glucose-6-phosphate isomerase (447 aa).

Catalysis depends on Glu-289, which acts as the Proton donor. Active-site residues include His-310 and Lys-424.

The protein belongs to the GPI family.

The protein localises to the cytoplasm. The catalysed reaction is alpha-D-glucose 6-phosphate = beta-D-fructose 6-phosphate. It participates in carbohydrate biosynthesis; gluconeogenesis. The protein operates within carbohydrate degradation; glycolysis; D-glyceraldehyde 3-phosphate and glycerone phosphate from D-glucose: step 2/4. Functionally, catalyzes the reversible isomerization of glucose-6-phosphate to fructose-6-phosphate. The polypeptide is Glucose-6-phosphate isomerase (Parabacteroides distasonis (strain ATCC 8503 / DSM 20701 / CIP 104284 / JCM 5825 / NCTC 11152)).